The sequence spans 660 residues: Arginine--tRNA ligase, cytoplasmic (660 aa).

Met-1 bears the N-acetylmethionine mark. The tract at residues 1 to 72 (MDGLVAQCSA…QEERRKPTKN (72 aa)) is could be involved in the assembly of the multisynthetase complex. L-arginine-binding positions include 200-202 (SPN), His-211, Tyr-384, Asp-388, and Gln-412. The 'HIGH' region motif lies at 201-212 (PNIAKEMHVGHL). The interaction with tRNA stretch occupies residues 529 to 543 (NTAAYLLYAFTRIRS).

This sequence belongs to the class-I aminoacyl-tRNA synthetase family. In terms of assembly, interacts (via N-terminus) with AIMP1 (via N-terminus); this stimulates its catalytic activity. Interacts (via N-terminus) with LARS2 (via C-terminus). Monomer. Part of a multisubunit complex that groups tRNA ligases for Arg (RARS1), Asp (DARS1), Gln (QARS1), Ile (IARS1), Leu (LARS1), Lys (KARS1), Met (MARS1) the bifunctional ligase for Glu and Pro (EPRS1) and the auxiliary subunits AIMP1/p43, AIMP2/p38 and EEF1E1/p18. Interacts with QARS1. Part of a complex composed of RARS1, QARS1 and AIMP1.

The protein localises to the cytoplasm. The protein resides in the cytosol. It carries out the reaction tRNA(Arg) + L-arginine + ATP = L-arginyl-tRNA(Arg) + AMP + diphosphate. In terms of biological role, forms part of a macromolecular complex that catalyzes the attachment of specific amino acids to cognate tRNAs during protein synthesis. Modulates the secretion of AIMP1 and may be involved in generation of the inflammatory cytokine EMAP2 from AIMP1. The sequence is that of Arginine--tRNA ligase, cytoplasmic (Rars1) from Mus musculus (Mouse).